The sequence spans 742 residues: Phosphoribosylformylglycinamidine synthase subunit PurL (742 aa).

The active site involves His-50. ATP-binding residues include Tyr-53 and Lys-92. A Mg(2+)-binding site is contributed by Glu-94. Substrate is bound by residues 95–98 (SHNH) and Arg-117. His-96 serves as the catalytic Proton acceptor. A Mg(2+)-binding site is contributed by Asp-118. Gln-241 lines the substrate pocket. Residue Asp-269 participates in Mg(2+) binding. A substrate-binding site is contributed by 313–315 (ESQ). Residues Asp-494 and Gly-531 each contribute to the ATP site. Position 532 (Asn-532) interacts with Mg(2+). Position 534 (Ser-534) interacts with substrate.

Belongs to the FGAMS family. As to quaternary structure, monomer. Part of the FGAM synthase complex composed of 1 PurL, 1 PurQ and 2 PurS subunits.

Its subcellular location is the cytoplasm. The catalysed reaction is N(2)-formyl-N(1)-(5-phospho-beta-D-ribosyl)glycinamide + L-glutamine + ATP + H2O = 2-formamido-N(1)-(5-O-phospho-beta-D-ribosyl)acetamidine + L-glutamate + ADP + phosphate + H(+). Its pathway is purine metabolism; IMP biosynthesis via de novo pathway; 5-amino-1-(5-phospho-D-ribosyl)imidazole from N(2)-formyl-N(1)-(5-phospho-D-ribosyl)glycinamide: step 1/2. In terms of biological role, part of the phosphoribosylformylglycinamidine synthase complex involved in the purines biosynthetic pathway. Catalyzes the ATP-dependent conversion of formylglycinamide ribonucleotide (FGAR) and glutamine to yield formylglycinamidine ribonucleotide (FGAM) and glutamate. The FGAM synthase complex is composed of three subunits. PurQ produces an ammonia molecule by converting glutamine to glutamate. PurL transfers the ammonia molecule to FGAR to form FGAM in an ATP-dependent manner. PurS interacts with PurQ and PurL and is thought to assist in the transfer of the ammonia molecule from PurQ to PurL. This is Phosphoribosylformylglycinamidine synthase subunit PurL from Sinorhizobium fredii (strain NBRC 101917 / NGR234).